Here is an 881-residue protein sequence, read N- to C-terminus: Valine--tRNA ligase (881 aa).

Positions P48–H58 match the 'HIGH' region motif. The 'KMSKS' region signature appears at K527 to S531. Residue K530 coordinates ATP. 2 coiled-coil regions span residues K721–N747 and L811–K881.

Belongs to the class-I aminoacyl-tRNA synthetase family. ValS type 1 subfamily. Monomer.

It localises to the cytoplasm. It carries out the reaction tRNA(Val) + L-valine + ATP = L-valyl-tRNA(Val) + AMP + diphosphate. Its function is as follows. Catalyzes the attachment of valine to tRNA(Val). As ValRS can inadvertently accommodate and process structurally similar amino acids such as threonine, to avoid such errors, it has a 'posttransfer' editing activity that hydrolyzes mischarged Thr-tRNA(Val) in a tRNA-dependent manner. This Clostridium acetobutylicum (strain ATCC 824 / DSM 792 / JCM 1419 / IAM 19013 / LMG 5710 / NBRC 13948 / NRRL B-527 / VKM B-1787 / 2291 / W) protein is Valine--tRNA ligase.